We begin with the raw amino-acid sequence, 260 residues long: Coiled-coil domain-containing protein 127 (260 aa).

Positions 49 to 135 (QKEVEKEREA…QVMQEKRQVQ (87 aa)) form a coiled coil.

The chain is Coiled-coil domain-containing protein 127 (CCDC127) from Homo sapiens (Human).